The chain runs to 215 residues: Protein LURP-one-related 4 (215 aa).

This sequence belongs to the LOR family.

Might be related to the phospholipid scramblase and tubby-like superfamily of membrane tethered transcription factors. This Arabidopsis thaliana (Mouse-ear cress) protein is Protein LURP-one-related 4.